A 288-amino-acid polypeptide reads, in one-letter code: Transmembrane and coiled-coil domain-containing protein 5A (288 aa).

A coiled-coil region spans residues 13 to 105 (IISLNMDLER…VHSISELQRK (93 aa)). The helical transmembrane segment at 227–249 (SLLFSTLFFIRLLGYLIFHLSFI) threads the bilayer.

Testis-specific. Expressed in spermatogenic cells of testis but disappear by the time mature spermatozoa are formed (at protein level).

Its subcellular location is the endoplasmic reticulum membrane. It is found in the nucleus membrane. The chain is Transmembrane and coiled-coil domain-containing protein 5A (Tmco5a) from Rattus norvegicus (Rat).